The chain runs to 327 residues: tRNA dimethylallyltransferase (327 aa).

ATP is bound at residue 14 to 21 (GPTASGKT). 16-21 (TASGKT) provides a ligand contact to substrate. Interaction with substrate tRNA stretches follow at residues 39 to 42 (DSAL) and 163 to 167 (QRIQR).

This sequence belongs to the IPP transferase family. Monomer. Mg(2+) serves as cofactor.

The catalysed reaction is adenosine(37) in tRNA + dimethylallyl diphosphate = N(6)-dimethylallyladenosine(37) in tRNA + diphosphate. In terms of biological role, catalyzes the transfer of a dimethylallyl group onto the adenine at position 37 in tRNAs that read codons beginning with uridine, leading to the formation of N6-(dimethylallyl)adenosine (i(6)A). This chain is tRNA dimethylallyltransferase, found in Xanthomonas oryzae pv. oryzae (strain MAFF 311018).